Reading from the N-terminus, the 64-residue chain is DNA-directed RNA polymerase subunit Rpo10 (64 aa).

Zn(2+)-binding residues include Cys-7, Cys-10, Cys-45, and Cys-46.

It belongs to the archaeal Rpo10/eukaryotic RPB10 RNA polymerase subunit family. Part of the RNA polymerase complex. Zn(2+) serves as cofactor.

Its subcellular location is the cytoplasm. The catalysed reaction is RNA(n) + a ribonucleoside 5'-triphosphate = RNA(n+1) + diphosphate. In terms of biological role, DNA-dependent RNA polymerase (RNAP) catalyzes the transcription of DNA into RNA using the four ribonucleoside triphosphates as substrates. The chain is DNA-directed RNA polymerase subunit Rpo10 from Natronomonas pharaonis (strain ATCC 35678 / DSM 2160 / CIP 103997 / JCM 8858 / NBRC 14720 / NCIMB 2260 / Gabara) (Halobacterium pharaonis).